Consider the following 390-residue polypeptide: L-seryl-tRNA(Sec) selenium transferase (390 aa).

At lysine 225 the chain carries N6-(pyridoxal phosphate)lysine.

It belongs to the SelA family. It depends on pyridoxal 5'-phosphate as a cofactor.

It is found in the cytoplasm. It catalyses the reaction L-seryl-tRNA(Sec) + selenophosphate + H(+) = L-selenocysteinyl-tRNA(Sec) + phosphate. It participates in aminoacyl-tRNA biosynthesis; selenocysteinyl-tRNA(Sec) biosynthesis; selenocysteinyl-tRNA(Sec) from L-seryl-tRNA(Sec) (bacterial route): step 1/1. Its function is as follows. Converts seryl-tRNA(Sec) to selenocysteinyl-tRNA(Sec) required for selenoprotein biosynthesis. This chain is L-seryl-tRNA(Sec) selenium transferase, found in Helicobacter pylori (strain J99 / ATCC 700824) (Campylobacter pylori J99).